We begin with the raw amino-acid sequence, 513 residues long: OTU domain-containing protein 5-A (513 aa).

Disordered regions lie at residues Met-1–Gly-75 and Gly-99–Glu-136. Residues Phe-166–Pro-289 enclose the OTU domain. Positions Met-171–Cys-177 are cys-loop. Asp-174 is an active-site residue. The active-site Nucleophile is the Cys-177. Positions Lys-226 to Ile-236 are variable-loop. The segment at Tyr-277–His-282 is his-loop. The active site involves His-282. Positions Leu-387 to Asp-446 are disordered.

This sequence belongs to the peptidase C85 family.

The catalysed reaction is Thiol-dependent hydrolysis of ester, thioester, amide, peptide and isopeptide bonds formed by the C-terminal Gly of ubiquitin (a 76-residue protein attached to proteins as an intracellular targeting signal).. Functionally, deubiquitinating enzyme that may function as negative regulator of the innate immune system. Has peptidase activity towards 'Lys-48'- and 'Lys-63'-linked polyubiquitin chains. Can also cleave 'Lys-11'-linked ubiquitin chains (in vitro). This chain is OTU domain-containing protein 5-A (otud5-a), found in Xenopus laevis (African clawed frog).